The sequence spans 292 residues: Ribosomal protein L11 methyltransferase (292 aa).

S-adenosyl-L-methionine-binding residues include Thr136, Gly159, Asp181, and Asn228.

Belongs to the methyltransferase superfamily. PrmA family.

The protein resides in the cytoplasm. It carries out the reaction L-lysyl-[protein] + 3 S-adenosyl-L-methionine = N(6),N(6),N(6)-trimethyl-L-lysyl-[protein] + 3 S-adenosyl-L-homocysteine + 3 H(+). Methylates ribosomal protein L11. This chain is Ribosomal protein L11 methyltransferase, found in Rhizobium johnstonii (strain DSM 114642 / LMG 32736 / 3841) (Rhizobium leguminosarum bv. viciae).